A 220-amino-acid chain; its full sequence is MNYAKFIDHTLLKPESTRQQIDQIIDEAKEYNFKSICVNPTHVKYAAERLNDSGVLVCTVIGFPLGATTTATKIFETEDAIKNGATEIDMVINIGALKDGRFEDVQKDIEGVVGAANGKTVKVIIETVLLSDEEKVKASELAKAAGADFVKTSTGFAGGGATPEDVKLMKDTVGDELEVKASGGVRSLEDFNKMIDAGATRIGASAGVQIIQGLESDSDY.

The Proton donor/acceptor role is filled by D89. K151 (schiff-base intermediate with acetaldehyde) is an active-site residue. The active-site Proton donor/acceptor is K180.

It belongs to the DeoC/FbaB aldolase family. DeoC type 1 subfamily.

It is found in the cytoplasm. The catalysed reaction is 2-deoxy-D-ribose 5-phosphate = D-glyceraldehyde 3-phosphate + acetaldehyde. Its pathway is carbohydrate degradation; 2-deoxy-D-ribose 1-phosphate degradation; D-glyceraldehyde 3-phosphate and acetaldehyde from 2-deoxy-alpha-D-ribose 1-phosphate: step 2/2. In terms of biological role, catalyzes a reversible aldol reaction between acetaldehyde and D-glyceraldehyde 3-phosphate to generate 2-deoxy-D-ribose 5-phosphate. The sequence is that of Deoxyribose-phosphate aldolase from Staphylococcus haemolyticus (strain JCSC1435).